Here is a 321-residue protein sequence, read N- to C-terminus: Aspartate carbamoyltransferase catalytic subunit (321 aa).

Residues Arg57 and Thr58 each contribute to the carbamoyl phosphate site. Lys85 contributes to the L-aspartate binding site. The carbamoyl phosphate site is built by Arg107, His142, and Gln145. Arg175 and Arg229 together coordinate L-aspartate. Residues Gly270 and Pro271 each coordinate carbamoyl phosphate.

Belongs to the aspartate/ornithine carbamoyltransferase superfamily. ATCase family. Heterododecamer (2C3:3R2) of six catalytic PyrB chains organized as two trimers (C3), and six regulatory PyrI chains organized as three dimers (R2).

It carries out the reaction carbamoyl phosphate + L-aspartate = N-carbamoyl-L-aspartate + phosphate + H(+). It functions in the pathway pyrimidine metabolism; UMP biosynthesis via de novo pathway; (S)-dihydroorotate from bicarbonate: step 2/3. Functionally, catalyzes the condensation of carbamoyl phosphate and aspartate to form carbamoyl aspartate and inorganic phosphate, the committed step in the de novo pyrimidine nucleotide biosynthesis pathway. The polypeptide is Aspartate carbamoyltransferase catalytic subunit (Mycobacterium leprae (strain TN)).